The sequence spans 278 residues: Putative phosphoenolpyruvate synthase regulatory protein (278 aa).

An ADP-binding site is contributed by G158–T165.

The protein belongs to the pyruvate, phosphate/water dikinase regulatory protein family. PSRP subfamily.

It carries out the reaction [pyruvate, water dikinase] + ADP = [pyruvate, water dikinase]-phosphate + AMP + H(+). The enzyme catalyses [pyruvate, water dikinase]-phosphate + phosphate + H(+) = [pyruvate, water dikinase] + diphosphate. Its function is as follows. Bifunctional serine/threonine kinase and phosphorylase involved in the regulation of the phosphoenolpyruvate synthase (PEPS) by catalyzing its phosphorylation/dephosphorylation. This is Putative phosphoenolpyruvate synthase regulatory protein from Acinetobacter baylyi (strain ATCC 33305 / BD413 / ADP1).